The primary structure comprises 265 residues: 2-amino-3,7-dideoxy-D-threo-hept-6-ulosonate synthase (265 aa).

Asp-25 (proton acceptor) is an active-site residue. 1-deoxy-D-threo-hexo-2,5-diulose 6-phosphate is bound by residues 25-29 and 144-146; these read DHGIT and YAR. Tyr-144 acts as the Proton donor in catalysis. Catalysis depends on Lys-174, which acts as the Schiff-base intermediate with substrate. 1-deoxy-D-threo-hexo-2,5-diulose 6-phosphate-binding positions include 199–200 and 226–227; these read GG and GR.

Belongs to the DeoC/FbaB aldolase family. ADHS subfamily. Homodecamer.

The catalysed reaction is 1-deoxy-D-threo-hexo-2,5-diulose 6-phosphate + L-aspartate 4-semialdehyde = 2,3-dioxopropyl phosphate + 2-amino-2,3,7-trideoxy-D-lyxo-hept-6-ulosonate. Catalyzes a transaldol reaction between 6-deoxy-5-ketofructose 1-phosphate (DKFP) and L-aspartate semialdehyde (ASA) with an elimination of hydroxypyruvaldehyde phosphate to yield 2-amino-3,7-dideoxy-D-threo-hept-6-ulosonate (ADH). Plays a key role in an alternative pathway of the biosynthesis of 3-dehydroquinate (DHQ), which is involved in the canonical pathway for the biosynthesis of aromatic amino acids. This Halobacterium salinarum (strain ATCC 700922 / JCM 11081 / NRC-1) (Halobacterium halobium) protein is 2-amino-3,7-dideoxy-D-threo-hept-6-ulosonate synthase.